The sequence spans 559 residues: MRRLSSWRKMATAEKQKHDGRVKIGHYILGDTLGVGTFGKVKVGKHELTGHKVAVKILNRQKIRSLDVVGKIRREIQNLKLFRHPHIIKLYQVISTPSDIFMVMEYVSGGELFDYICKNGRLDEKESRRLFQQILSGVDYCHRHMVVHRDLKPENVLLDAHMNAKIADFGLSNMMSDGEFLRTSCGSPNYAAPEVISGRLYAGPEVDIWSSGVILYALLCGTLPFDDDHVPTLFKKICDGIFYTPQYLNPSVISLLKHMLQVDPMKRATIKDIREHEWFKQDLPKYLFPEDPSYSSTMIDDEALKEVCEKFECSEEEVLSCLYNRNHQDPLAVAYHLIIDNRRIMNEAKDFYLATSPPDSFLDDHHLTRPHPERVPFLVAETPRARHTLDELNPQKSKHQGVRKAKWHLGIRSQSRPNDIMAEVCRAIKQLDYEWKVVNPYYLRVRRKNPVTSTYSKMSLQLYQVDSRTYLLDFRSIDDEITEAKSGTATPQRSGSVSNYRSCQRSDSDAEAQGKSSEVSLTSSVTSLDSSPVDLTPRPGSHTIEFFEMCANLIKILAQ.

The Protein kinase domain occupies 27 to 279 (YILGDTLGVG…IKDIREHEWF (253 aa)). T32 bears the Phosphothreonine mark. Residues 33 to 41 (LGVGTFGKV) and K56 contribute to the ATP site. The Proton acceptor role is filled by D150. The residue at position 183 (T183) is a Phosphothreonine; by LKB1 and CaMKK2. Residues T269 and T355 each carry the phosphothreonine modification. The segment at 302 to 381 (EALKEVCEKF…PERVPFLVAE (80 aa)) is AIS. A Phosphoserine modification is found at S356. At S360 the chain carries Phosphoserine; by ULK1. T368 bears the Phosphothreonine; by ULK1 mark. T382 carries the post-translational modification Phosphothreonine. Residues S397, S467, and S486 each carry the phosphoserine modification. The segment covering 485-505 (KSGTATPQRSGSVSNYRSCQR) has biased composition (polar residues). The segment at 485 to 536 (KSGTATPQRSGSVSNYRSCQRSDSDAEAQGKSSEVSLTSSVTSLDSSPVDLT) is disordered. 2 positions are modified to phosphothreonine: T488 and T490. Phosphoserine occurs at positions 496, 508, 524, and 527. Over residues 516 to 535 (SSEVSLTSSVTSLDSSPVDL) the composition is skewed to low complexity.

The protein belongs to the protein kinase superfamily. CAMK Ser/Thr protein kinase family. SNF1 subfamily. AMPK is a heterotrimer of an alpha catalytic subunit (PRKAA1 or PRKAA2), a beta (PRKAB1 or PRKAB2) and a gamma non-catalytic subunits (PRKAG1, PRKAG2 or PRKAG3). Interacts with FNIP1 and FNIP2. As to quaternary structure, (Microbial infection) Interacts with Dengue type 2 virus non-structural protein 1; this interaction promotes the AMPK/ERK/mTOR signaling pathway to induce autophagy. It depends on Mg(2+) as a cofactor. Post-translationally, ubiquitinated. Phosphorylated at Thr-183 by STK11/LKB1 in complex with STE20-related adapter-alpha (STRADA) pseudo kinase and CAB39. Also phosphorylated at Thr-183 by CAMKK2; triggered by a rise in intracellular calcium ions, without detectable changes in the AMP/ATP ratio. CAMKK1 can also phosphorylate Thr-183, but at a much lower level. Dephosphorylated by protein phosphatase 2A and 2C (PP2A and PP2C). Phosphorylated by ULK1 and ULK2; leading to negatively regulate AMPK activity and suggesting the existence of a regulatory feedback loop between ULK1, ULK2 and AMPK. Dephosphorylated by PPM1A and PPM1B. In terms of processing, glycosylated; O-GlcNAcylated by OGT, promoting the AMP-activated protein kinase (AMPK) activity.

Its subcellular location is the cytoplasm. It is found in the nucleus. The catalysed reaction is L-seryl-[protein] + ATP = O-phospho-L-seryl-[protein] + ADP + H(+). It catalyses the reaction L-threonyl-[protein] + ATP = O-phospho-L-threonyl-[protein] + ADP + H(+). The enzyme catalyses L-seryl-[acetyl-CoA carboxylase] + ATP = O-phospho-L-seryl-[acetyl-CoA carboxylase] + ADP + H(+). It carries out the reaction L-seryl-[3-hydroxy-3-methylglutaryl-coenzyme A reductase] + ATP = O-phospho-L-seryl-[3-hydroxy-3-methylglutaryl-coenzyme A reductase] + ADP + H(+). The catalysed reaction is L-seryl-[tau protein] + ATP = O-phospho-L-seryl-[tau protein] + ADP + H(+). It catalyses the reaction L-threonyl-[tau protein] + ATP = O-phospho-L-threonyl-[tau protein] + ADP + H(+). With respect to regulation, activated by phosphorylation on Thr-183. Binding of AMP to non-catalytic gamma subunit (PRKAG1, PRKAG2 or PRKAG3) results in allosteric activation, inducing phosphorylation on Thr-183. AMP-binding to gamma subunit also sustains activity by preventing dephosphorylation of Thr-183. ADP also stimulates Thr-183 phosphorylation, without stimulating already phosphorylated AMPK. ATP promotes dephosphorylation of Thr-183, rendering the enzyme inactive. Under physiological conditions AMPK mainly exists in its inactive form in complex with ATP, which is much more abundant than AMP. AMPK is activated by antihyperglycemic drug metformin, a drug prescribed to patients with type 2 diabetes: in vivo, metformin seems to mainly inhibit liver gluconeogenesis. However, metformin can be used to activate AMPK in muscle and other cells in culture or ex vivo. Selectively inhibited by compound C (6-[4-(2-Piperidin-1-yl-ethoxy)-phenyl)]-3-pyridin-4-yl-pyyrazolo[1,5-a] pyrimidine. Activated by resveratrol, a natural polyphenol present in red wine, and S17834, a synthetic polyphenol. Functionally, catalytic subunit of AMP-activated protein kinase (AMPK), an energy sensor protein kinase that plays a key role in regulating cellular energy metabolism. In response to reduction of intracellular ATP levels, AMPK activates energy-producing pathways and inhibits energy-consuming processes: inhibits protein, carbohydrate and lipid biosynthesis, as well as cell growth and proliferation. AMPK acts via direct phosphorylation of metabolic enzymes, and by longer-term effects via phosphorylation of transcription regulators. Regulates lipid synthesis by phosphorylating and inactivating lipid metabolic enzymes such as ACACA, ACACB, GYS1, HMGCR and LIPE; regulates fatty acid and cholesterol synthesis by phosphorylating acetyl-CoA carboxylase (ACACA and ACACB) and hormone-sensitive lipase (LIPE) enzymes, respectively. Promotes lipolysis of lipid droplets by mediating phosphorylation of isoform 1 of CHKA (CHKalpha2). Regulates insulin-signaling and glycolysis by phosphorylating IRS1, PFKFB2 and PFKFB3. AMPK stimulates glucose uptake in muscle by increasing the translocation of the glucose transporter SLC2A4/GLUT4 to the plasma membrane, possibly by mediating phosphorylation of TBC1D4/AS160. Regulates transcription and chromatin structure by phosphorylating transcription regulators involved in energy metabolism such as CRTC2/TORC2, FOXO3, histone H2B, HDAC5, MEF2C, MLXIPL/ChREBP, EP300, HNF4A, p53/TP53, SREBF1, SREBF2 and PPARGC1A. Acts as a key regulator of glucose homeostasis in liver by phosphorylating CRTC2/TORC2, leading to CRTC2/TORC2 sequestration in the cytoplasm. In response to stress, phosphorylates 'Ser-36' of histone H2B (H2BS36ph), leading to promote transcription. Acts as a key regulator of cell growth and proliferation by phosphorylating FNIP1, TSC2, RPTOR, WDR24 and ATG1/ULK1: in response to nutrient limitation, negatively regulates the mTORC1 complex by phosphorylating RPTOR component of the mTORC1 complex and by phosphorylating and activating TSC2. Also phosphorylates and inhibits GATOR2 subunit WDR24 in response to nutrient limitation, leading to suppress glucose-mediated mTORC1 activation. In response to energetic stress, phosphorylates FNIP1, inactivating the non-canonical mTORC1 signaling, thereby promoting nuclear translocation of TFEB and TFE3, and inducing transcription of lysosomal or autophagy genes. In response to nutrient limitation, promotes autophagy by phosphorylating and activating ATG1/ULK1. In that process, it also activates WDR45/WIPI4. Phosphorylates CASP6, thereby preventing its autoprocessing and subsequent activation. In response to nutrient limitation, phosphorylates transcription factor FOXO3 promoting FOXO3 mitochondrial import. Also acts as a regulator of cellular polarity by remodeling the actin cytoskeleton; probably by indirectly activating myosin. AMPK also acts as a regulator of circadian rhythm by mediating phosphorylation of CRY1, leading to destabilize it. May regulate the Wnt signaling pathway by phosphorylating CTNNB1, leading to stabilize it. Also has tau-protein kinase activity: in response to amyloid beta A4 protein (APP) exposure, activated by CAMKK2, leading to phosphorylation of MAPT/TAU; however the relevance of such data remains unclear in vivo. Also phosphorylates CFTR, EEF2K, KLC1, NOS3 and SLC12A1. Regulates hepatic lipogenesis. Activated via SIRT3, represses sterol regulatory element-binding protein (SREBP) transcriptional activities and ATP-consuming lipogenesis to restore cellular energy balance. Upon stress, regulates mitochondrial fragmentation through phosphorylation of MTFR1L. The sequence is that of 5'-AMP-activated protein kinase catalytic subunit alpha-1 from Homo sapiens (Human).